The following is a 108-amino-acid chain: uncharacterized protein (108 aa).

Positions 1–16 (MKKLILIAIMASGLVA) are cleaved as a signal peptide. Cysteine 17 carries the N-palmitoyl cysteine lipid modification. The S-diacylglycerol cysteine moiety is linked to residue cysteine 17.

It localises to the cell membrane. This is an uncharacterized protein from Escherichia coli (strain K12).